The chain runs to 146 residues: MNPAHLLVLSAVCVSLLGASNIPPQSLNLLQFKDMIRCTIPCERTWGEYADYGCYCGAGGSGRPIDALDRCCYVHDNCYGDAEKRNCNPKVVSYSSKCDKRTLFCYDAPGSCARFVCDCDRTAALCFGDSEYIGRHKNIDTKRYCQ.

An N-terminal signal peptide occupies residues 1–19 (MNPAHLLVLSAVCVSLLGA). The propeptide occupies 20–27 (SNIPPQSL). Intrachain disulfides connect C54–C145, C56–C72, C71–C126, C78–C119, C87–C112, and C105–C117. Ca(2+) contacts are provided by Y55, G57, and G59. The active site involves H75. Residue D76 coordinates Ca(2+). D120 is an active-site residue.

The protein belongs to the phospholipase A2 family. Group I subfamily. D49 sub-subfamily. As to quaternary structure, heterodimer; disulfide-linked. The A chain has phospholipase A2 activity and the B chain shows homology with the basic protease inhibitors. Requires Ca(2+) as cofactor. Expressed by the venom gland.

The protein resides in the secreted. It catalyses the reaction a 1,2-diacyl-sn-glycero-3-phosphocholine + H2O = a 1-acyl-sn-glycero-3-phosphocholine + a fatty acid + H(+). Its function is as follows. Snake venom phospholipase A2 (PLA2) that inhibits neuromuscular transmission by blocking acetylcholine release from the nerve termini. PLA2 catalyzes the calcium-dependent hydrolysis of the 2-acyl groups in 3-sn-phosphoglycerides. This chain is Basic phospholipase A2 beta-bungarotoxin A2 chain, found in Bungarus flaviceps flaviceps (Red-headed krait).